Consider the following 268-residue polypeptide: Proenkephalin-A (268 aa).

Positions 1-24 are cleaved as a signal peptide; that stretch reads MARFLRLCTWLLVLGSCLLATVQA. Cystine bridges form between cysteine 26–cysteine 48, cysteine 30–cysteine 52, and cysteine 33–cysteine 65. Positions 162-185 are disordered; that stretch reads GTGDNRAREGRHQESTDNDDNMSK. The span at 166-176 shows a compositional bias: basic and acidic residues; the sequence is NRAREGRHQES. 2 consecutive propeptides follow at residues 197 to 208 and 218 to 228; these read SPQVEDEAKELQ and VGRPEWWMDYQ. Serine 252 carries the post-translational modification Phosphoserine.

This sequence belongs to the opioid neuropeptide precursor family. Proenkephalin-A is cleaved by CTSL to generate Met-enkephalin. In terms of processing, processed and degraded by ACE. Post-translationally, probably cleaved by ACE. Processed by ACE to generate Met-enkephalin in the nucleus accumbens of the brain. In terms of processing, the N-terminal domain contains 6 conserved cysteines thought to be involved in disulfide bonding and/or processing.

The protein localises to the cytoplasmic vesicle. It is found in the secretory vesicle. Its subcellular location is the chromaffin granule lumen. It localises to the secreted. Functionally, neuropeptide that competes with and mimic the effects of opiate drugs. They play a role in a number of physiologic functions, including pain perception and responses to stress. In terms of biological role, met-enkephalin-Arg-Phe neuropeptide acts as a strong ligand of Mu-type opioid receptor OPRM1. Met-enkephalin-Arg-Phe-binding to OPRM1 in the nucleus accumbens of the brain increases activation of OPRM1, leading to long-term synaptic depression of glutamate release. Its function is as follows. Increases glutamate release in the striatum and decreases GABA concentration in the striatum. Increases glutamate release in the striatum. In Mesocricetus auratus (Golden hamster), this protein is Proenkephalin-A (PENK).